The sequence spans 205 residues: Adenylyl-sulfate kinase (205 aa).

An ATP-binding site is contributed by 31–38; that stretch reads GLSGSGKS. The active-site Phosphoserine intermediate is serine 105.

The protein belongs to the APS kinase family.

The enzyme catalyses adenosine 5'-phosphosulfate + ATP = 3'-phosphoadenylyl sulfate + ADP + H(+). The protein operates within sulfur metabolism; hydrogen sulfide biosynthesis; sulfite from sulfate: step 2/3. Its function is as follows. Catalyzes the synthesis of activated sulfate. The sequence is that of Adenylyl-sulfate kinase from Shewanella halifaxensis (strain HAW-EB4).